A 187-amino-acid polypeptide reads, in one-letter code: Acireductone dioxygenase 4 (187 aa).

Ala-2 carries the post-translational modification N-acetylalanine. 4 residues coordinate Fe(2+): His-89, His-91, Glu-95, and His-134. Positions 89, 91, 95, and 134 each coordinate Ni(2+).

It belongs to the acireductone dioxygenase (ARD) family. Requires Fe(2+) as cofactor. It depends on Ni(2+) as a cofactor.

The protein resides in the cytoplasm. Its subcellular location is the nucleus. It carries out the reaction 1,2-dihydroxy-5-(methylsulfanyl)pent-1-en-3-one + O2 = 4-methylsulfanyl-2-oxobutanoate + formate + 2 H(+). The catalysed reaction is 1,2-dihydroxy-5-(methylsulfanyl)pent-1-en-3-one + O2 = 3-(methylsulfanyl)propanoate + CO + formate + 2 H(+). It participates in amino-acid biosynthesis; L-methionine biosynthesis via salvage pathway; L-methionine from S-methyl-5-thio-alpha-D-ribose 1-phosphate: step 5/6. Functionally, catalyzes 2 different reactions between oxygen and the acireductone 1,2-dihydroxy-3-keto-5-methylthiopentene (DHK-MTPene) depending upon the metal bound in the active site. Fe-containing acireductone dioxygenase (Fe-ARD) produces formate and 2-keto-4-methylthiobutyrate (KMTB), the alpha-ketoacid precursor of methionine in the methionine recycle pathway. Ni-containing acireductone dioxygenase (Ni-ARD) produces methylthiopropionate, carbon monoxide and formate, and does not lie on the methionine recycle pathway. The polypeptide is Acireductone dioxygenase 4 (ARD4) (Arabidopsis thaliana (Mouse-ear cress)).